We begin with the raw amino-acid sequence, 123 residues long: Large ribosomal subunit protein bL19 (123 aa).

Belongs to the bacterial ribosomal protein bL19 family.

Functionally, this protein is located at the 30S-50S ribosomal subunit interface and may play a role in the structure and function of the aminoacyl-tRNA binding site. This Acinetobacter baylyi (strain ATCC 33305 / BD413 / ADP1) protein is Large ribosomal subunit protein bL19.